We begin with the raw amino-acid sequence, 476 residues long: MWTSLRHLKCSIPRQSINRCSSGLSKQFFKYKSTVSRNQDILKKITDTNTHAMNTADIPEGISESFVDHQFEPNKLVPTNDKKIIYNRLKPITPNDSYVSCTIFDIKGNITAVSRKYPKMKFLKGNDLFPRDLRKIDTSSIDVVPSIMVRSPNCILVNLLHIKAIIKKDSVMVFDTSTPSIATKLGLFMYDLEMKLKLPSGNICYEFRALESILISVMSYLEADLRNHLQGCGLILAELEDEIDRNKLQDLLIKSKKLSSFYQKAVLIRNVLEELLDNDEDLAGMYLTDPIKFDPTIENPTDFADLEMMLESYYKQCDEFVQQAGSLINDIKATEEIVNIILDTNRNSLMLFELKITVYTLGFTVATLLPAFYGMNLKNYIEESTFGFGAVAVFSIIQGLLIIMLSFRKLRKVQKLTMMDGAGNHLHHSSSPIGLMNKDKWYYRLFYGNRHTKYDRPTPKESDVIWRMINDDKPLK.

The transit peptide at Met-1–Cys-20 directs the protein to the mitochondrion. The chain crosses the membrane as a helical span at residues Leu-349–Leu-369. The short motif at Tyr-373–Asn-376 is the YGMN element. A helical transmembrane segment spans residues Thr-385 to Leu-405.

The protein belongs to the CorA metal ion transporter (MIT) (TC 1.A.35) family. In terms of assembly, homopentamer. Forms homooligomers. Interacts with MFM1.

Its subcellular location is the mitochondrion inner membrane. Functionally, high-conductance magnesium-selective channel that mediates the influx of magnesium into the mitochondrial matrix. Essential for the splicing of mRNA group II introns in mitochondria by affecting mitochondrial magnesium concentrations, which are critical for group II intron splicing. It also suppresses a variety of mitochondrial intron mutations and its absence may disturb the assembly of mitochondrial membrane complexes. The protein is Mitochondrial inner membrane magnesium transporter MRS2 (MRS2) of Debaryomyces hansenii (strain ATCC 36239 / CBS 767 / BCRC 21394 / JCM 1990 / NBRC 0083 / IGC 2968) (Yeast).